The following is a 1005-amino-acid chain: Negative regulator of pleiotropic drug resistance STB5 (1005 aa).

The interval 1-28 is disordered; it reads MSGPDKGSDSGQTANDPKQKKARNGQME. The segment at residues 32 to 59 is a DNA-binding region (zn(2)-C6 fungal-type); sequence CARCRKLKKKCPRQLPECSNCLKAREPC. Disordered stretches follow at residues 129–151, 666–693, and 763–831; these read GGEQ…SINR, KGKS…EDVK, and TKPT…SSLR. The span at 673–693 shows a compositional bias: basic and acidic residues; sequence KRFEKSKESDSDRGVTEEDVK. Over residues 763–773 the composition is skewed to polar residues; sequence TKPTANIMNDQ. Residues 792–801 are compositionally biased toward basic and acidic residues; sequence EGPKSLKEGN.

Its subcellular location is the nucleus. Its function is as follows. Transcription factor that negatively regulates pleiotropic drug resistance genes, including the ABC transporter genes CDR1, PDH1, and YOR1. This is Negative regulator of pleiotropic drug resistance STB5 from Candida glabrata (strain ATCC 2001 / BCRC 20586 / JCM 3761 / NBRC 0622 / NRRL Y-65 / CBS 138) (Yeast).